Consider the following 509-residue polypeptide: Sperm-associated antigen 6 (509 aa).

ARM repeat units follow at residues 31–70 (PQNIETLQNAGVMSLLRTLLLDVVPTIQQTAALALGRLAN), 73–112 (DDLAEAVVKCDILPQLVYSLAEQNRFYKKAAAFVLRAVGK), 115–154 (PQLAQAIVDCGALDTLVICLEDFDPGVKEAAAWALRYIAR), 157–196 (AELSQAVVDAGAVPLLVLCIQEPEIALKRIAASALSDIAK), 199–238 (PELAQTVVDAGAVAHLAQMILNPDAKLKHQILSALSQVSK), 241–280 (VDLAEMVVEAEIFPVVLTCLKDKDEYVKKNASTLIREIAK), 325–365 (ENLA…QIGR), and 368–409 (PEHA…NILQ).

As to quaternary structure, interacts with SPAG16 and SPAG17. As to expression, highly expressed in testis.

It localises to the cytoplasm. The protein resides in the cytoskeleton. Its subcellular location is the cell projection. It is found in the cilium. The protein localises to the flagellum. It localises to the cilium axoneme. Important for structural integrity of the central apparatus in the sperm tail and for flagellar motility. This is Sperm-associated antigen 6 (SPAG6) from Homo sapiens (Human).